A 465-amino-acid polypeptide reads, in one-letter code: MVMEKPSPLLVGREFVRQYYTLLNQAPDMLHRFYGKNSSYAHGGLDSNGKPADAVYGQKEIHRKVMSQNFTNCHTKIRHVDAHATLNDGVVVQVMGLLSNNNQALRRFMQTFVLAPEGSVANKFYVHNDIFRYQDEVFGGFVTEPQEESEEEVEEPEERQQTPEVVPDDSGTFYDQTVSNDLEEHLEEPVVEPEPEPEPEPEPEPVSDIQEDKPEAALEEAAPDDVQKSTSPAPADVAPAQEDLRTFSWASVTSKNLPPSGAVPVTGTPPHVVKVPASQPRPESKPDSQIPPQRPQRDQRVREQRINIPPQRGPRPIREAGEPGDVEPRRMVRHPDSHQLFIGNLPHEVDKSELKDFFQNFGNVVELRINSGGKLPNFGFVVFDDSEPVQKVLSNRPIMFRGAVRLNVEEKKTRAAREGDRRDNRLRGPGGPRGGPSGGMRGPPRGGMVQKPGFGVGRGITTPRQ.

One can recognise an NTF2 domain in the interval 11–133 (VGREFVRQYY…FYVHNDIFRY (123 aa)). Glycyl lysine isopeptide (Lys-Gly) (interchain with G-Cter in ubiquitin) cross-links involve residues Lys-36, Lys-50, Lys-59, Lys-64, Lys-76, and Lys-123. Residues 142–224 (VTEPQEESEE…EAALEEAAPD (83 aa)) are acidic disordered region. Position 143 is a phosphothreonine (Thr-143). The tract at residues 144-330 (EPQEESEEEV…GEPGDVEPRR (187 aa)) is disordered. 2 stretches are compositionally biased toward acidic residues: residues 145-157 (PQEESEEEVEEPE) and 184-205 (EHLEEPVVEPEPEPEPEPEPEP). Ser-149 carries the post-translational modification Phosphoserine. Ser-231, Ser-248, and Ser-251 each carry phosphoserine. Positions 248-257 (SWASVTSKNL) are enriched in polar residues. Composition is skewed to basic and acidic residues over residues 295 to 305 (PQRDQRVREQR) and 316 to 330 (PIREAGEPGDVEPRR). The 76-residue stretch at 338–413 (HQLFIGNLPH…VRLNVEEKKT (76 aa)) folds into the RRM domain. Glycyl lysine isopeptide (Lys-Gly) (interchain with G-Cter in ubiquitin) cross-links involve residues Lys-351 and Lys-355. A Phosphoserine modification is found at Ser-371. Lys-374 is covalently cross-linked (Glycyl lysine isopeptide (Lys-Gly) (interchain with G-Cter in ubiquitin)). N6-acetyllysine; alternate is present on Lys-374. Lys-374 participates in a covalent cross-link: Glycyl lysine isopeptide (Lys-Gly) (interchain with G-Cter in SUMO2); alternate. A Glycyl lysine isopeptide (Lys-Gly) (interchain with G-Cter in ubiquitin); alternate cross-link involves residue Lys-391. The RG-rich region stretch occupies residues 408-464 (VEEKKTRAAREGDRRDNRLRGPGGPRGGPSGGMRGPPRGGMVQKPGFGVGRGITTPR). Over residues 411 to 426 (KKTRAAREGDRRDNRL) the composition is skewed to basic and acidic residues. A disordered region spans residues 411-465 (KKTRAAREGDRRDNRLRGPGGPRGGPSGGMRGPPRGGMVQKPGFGVGRGITTPRQ). The residue at position 427 (Arg-427) is an Asymmetric dimethylarginine. Residues 428 to 445 (GPGGPRGGPSGGMRGPPR) are compositionally biased toward gly residues. Arg-433 bears the Asymmetric dimethylarginine; alternate mark. Arg-433, Arg-445, Arg-458, and Arg-464 each carry omega-N-methylarginine; alternate. Arg-458 carries the dimethylated arginine; alternate modification.

As to quaternary structure, homodimer and oligomer. Component of a TAU mRNP complex, at least composed of IGF2BP1, ELAVL4 and G3BP1. Binds to the SH3 domain of Ras GTPase-activating protein (RASA1) in proliferating cells. No interaction in quiescent cells. Interacts (via NTF2 domain) with USP10; inhibiting stress granule formation by lowering G3BP1 valence. Interacts (via NTF2 domain) with CAPRIN1; promoting stress granule formation by lowering the saturation-concentration of G3BP1. Interacts (via NTF2 domain) with UBAP2L; promoting stress granule formation. Associates (via RG-rich region) with 40S ribosome subunits. Interacts with RPTOR and SPAG5; this complex is increased by oxidative stress. Interacts with ATXN2L. Interacts with STYXL1. Interacts with CGAS (via N-terminus); this interaction promotes the DNA-binding and activation of CGAS. Interacts (via C-terminus) with RIGI. Interacts with PABPC1. Interacts with QKI (isoforms QKI6 and QKI7); directing N(7)-methylguanine-containing mRNAs to stress granules. Mg(2+) is required as a cofactor. Post-translationally, phosphorylation of the acidic disordered region regulates stress granule assembly. RASA1-dependent phosphorylation of Ser-149 induces a conformational change that prevents self-association. Dephosphorylation after HRAS activation is required for stress granule assembly. Ser-149 phosphorylation induces partial nuclear localization. Arg-435 is dimethylated, probably to asymmetric dimethylarginine. In terms of processing, ubiquitinated by TRIM21 via 'Lys-63'-linked polyubiquitination in the NTF2 domain in response to heat shock, leading to stress granule disassembly: ubiquitination promotes interaction with the FAF2 adapter, followed by interaction with VCP, which extracts G3BP1 from stress granules, leading to stress granule disassembly. In case of prolonged stress, ubiquitination by TRIM21 leads to autophagy-dependent degradation of G3BP1 via recruitment of ubiquitinated G3BP1 by SQSTM1 and/or CALCOCO2 to autophagosomes. Ubiquitous.

It is found in the cytoplasm. Its subcellular location is the cytosol. The protein localises to the perikaryon. It localises to the stress granule. The protein resides in the nucleus. The enzyme catalyses ATP + H2O = ADP + phosphate + H(+). With respect to regulation, under physiological conditions, G3BP1 adopts a compact state that is stabilized by intramolecular interactions between the RG-rich and the acidic regions that inhibit phase separation. Upon stress, polysomes disassemble and mRNAs are released in an unfolded protein-free state. Binding of unfolded mRNA to G3BP1 outcompetes the intramolecular interactions and RNA-bound G3BP1 adopts an expanded conformation in which the RG-rich region becomes exposed to engage in protein-protein and protein-RNA interactions, allowing physical cross-linking of RNA molecules to form protein-RNA condensates, leading to liquid-liquid phase separation (LLPS). Protein involved in various processes, such as stress granule formation and innate immunity. Plays an essential role in stress granule formation. Stress granules are membraneless compartments that store mRNAs and proteins, such as stalled translation pre-initiation complexes, in response to stress. Promotes formation of stress granules phase-separated membraneless compartment by undergoing liquid-liquid phase separation (LLPS) upon unfolded RNA-binding: functions as a molecular switch that triggers RNA-dependent LLPS in response to a rise in intracellular free RNA concentrations. Also acts as an ATP- and magnesium-dependent helicase: unwinds DNA/DNA, RNA/DNA, and RNA/RNA substrates with comparable efficiency. Acts unidirectionally by moving in the 5' to 3' direction along the bound single-stranded DNA. Unwinds preferentially partial DNA and RNA duplexes having a 17 bp annealed portion and either a hanging 3' tail or hanging tails at both 5'- and 3'-ends. Plays an essential role in innate immunity by promoting CGAS and RIGI activity. Participates in the DNA-triggered cGAS/STING pathway by promoting the DNA binding and activation of CGAS. Triggers the condensation of cGAS, a process probably linked to the formation of membrane-less organelles. Also enhances RIGI-induced type I interferon production probably by helping RIGI at sensing pathogenic RNA. May also act as a phosphorylation-dependent sequence-specific endoribonuclease in vitro: Cleaves exclusively between cytosine and adenine and cleaves MYC mRNA preferentially at the 3'-UTR. This chain is Ras GTPase-activating protein-binding protein 1 (G3bp1), found in Mus musculus (Mouse).